The following is a 229-amino-acid chain: MFDVLPVEIWIIILDYLKSDKYNLYLVNKQFLSISLMNKVCDNELIITTIKTTNILALKLLIDYYNQESILDYALYFSCGIGNVRIIKEMIPDNYIGTEKLIFAAIQNDQDSVIDFFASRGFDLRINNDYLLRLAAEMNSLKTAKYLVSKGANCQAYNNAPLQKASINGHFEMVKFLVENGASVAAKKSYAIKKAKLYGHNNIVEYLEAKLIEIVGEKIFLEYFKPKYS.

ANK repeat units follow at residues 70–95 (ILDYALYFSCGIGNVRIIKEMIPDNY), 96–126 (IGTEKLIFAAIQNDQDSVIDFFASRGFDLRI), 127–156 (NNDYLLRLAAEMNSLKTAKYLVSKGANCQA), and 157–186 (YNNAPLQKASINGHFEMVKFLVENGASVAA).

This Acanthamoeba polyphaga (Amoeba) protein is Putative ankyrin repeat protein L148.